The sequence spans 314 residues: Cytochrome b558/566 subunit B (314 aa).

Transmembrane regions (helical) follow at residues 47–67 (LLLV…LIVS), 76–96 (SLIP…IPNY), 102–122 (LYSL…EGLI), 127–147 (LSIL…ASIL), 155–175 (LFIS…AYVI), 186–206 (YIAI…ENII), 233–253 (HITL…TSLI), and 264–284 (FLII…IYML).

Its subcellular location is the cell membrane. In Saccharolobus solfataricus (strain ATCC 35092 / DSM 1617 / JCM 11322 / P2) (Sulfolobus solfataricus), this protein is Cytochrome b558/566 subunit B (cbsB).